The sequence spans 526 residues: Berberine bridge enzyme-like 11 (526 aa).

The signal sequence occupies residues Met1–Ser21. Cys31 and Cys94 form a disulfide bridge. 4 N-linked (GlcNAc...) asparagine glycosylation sites follow: Asn52, Asn136, Asn273, and Asn482. An FAD-binding PCMH-type domain is found at Thr72 to Val247. The 6-(S-cysteinyl)-8alpha-(pros-histidyl)-FAD (His-Cys) cross-link spans His109–Cys171.

Belongs to the oxygen-dependent FAD-linked oxidoreductase family. It depends on FAD as a cofactor. In terms of processing, the FAD cofactor is bound via a bicovalent 6-S-cysteinyl, 8alpha-N1-histidyl FAD linkage.

It localises to the secreted. The protein resides in the cell wall. The sequence is that of Berberine bridge enzyme-like 11 from Arabidopsis thaliana (Mouse-ear cress).